Here is a 266-residue protein sequence, read N- to C-terminus: MKVLVLFCLVSLAAAGPLKDALNKAQVDAFYAEGYIVDGSNAADGDAPYQVSLQRTSHFCGGSIIADNYILTAAHCIQGLSASSLTIRYNTLRHNSGGLTVKASRIIGHEKYDSNTIDNDIALIQTASKMSTGTTNAQAIKLPEQGSDPKASSEVLITGWGTLSSGASSLPTKLQKVTVPIVDRKTCNANYGAVGADITDNMFCAGILNVGGKDACQGDSGGPVAANGVLVGAVSWGYGCAQAKYPGVYTRVGNYISWIKGKGVPV.

The first 15 residues, 1–15 (MKVLVLFCLVSLAAA), serve as a signal peptide directing secretion. Positions 16–35 (GPLKDALNKAQVDAFYAEGY) are excised as a propeptide. One can recognise a Peptidase S1 domain in the interval 36-260 (IVDGSNAADG…RVGNYISWIK (225 aa)). Cysteines 60 and 76 form a disulfide. Residues His75 and Asp120 each act as charge relay system in the active site. 2 cysteine pairs are disulfide-bonded: Cys187/Cys204 and Cys216/Cys240. The active-site Charge relay system is Ser220.

It belongs to the peptidase S1 family.

Its subcellular location is the secreted. It carries out the reaction Preferential cleavage: Arg-|-Xaa, Lys-|-Xaa.. This is Trypsin Blo t 3 from Blomia tropicalis (Mite).